A 339-amino-acid polypeptide reads, in one-letter code: Ketol-acid reductoisomerase (NADP(+)) (339 aa).

Residues 1–182 enclose the KARI N-terminal Rossmann domain; it reads MRVYYDRDAD…GGGRAGIIET (182 aa). NADP(+) contacts are provided by residues 24 to 27, arginine 48, serine 51, serine 53, and 83 to 86; these read YGSQ and DELQ. Histidine 108 is an active-site residue. Glycine 134 contacts NADP(+). Residues 183–328 form the KARI C-terminal knotted domain; that stretch reads TFREECETDL…AKLRDMMPWI (146 aa). Mg(2+)-binding residues include aspartate 191, glutamate 195, glutamate 227, and glutamate 231. Serine 252 contributes to the substrate binding site.

It belongs to the ketol-acid reductoisomerase family. Mg(2+) is required as a cofactor.

It carries out the reaction (2R)-2,3-dihydroxy-3-methylbutanoate + NADP(+) = (2S)-2-acetolactate + NADPH + H(+). The enzyme catalyses (2R,3R)-2,3-dihydroxy-3-methylpentanoate + NADP(+) = (S)-2-ethyl-2-hydroxy-3-oxobutanoate + NADPH + H(+). It participates in amino-acid biosynthesis; L-isoleucine biosynthesis; L-isoleucine from 2-oxobutanoate: step 2/4. It functions in the pathway amino-acid biosynthesis; L-valine biosynthesis; L-valine from pyruvate: step 2/4. Functionally, involved in the biosynthesis of branched-chain amino acids (BCAA). Catalyzes an alkyl-migration followed by a ketol-acid reduction of (S)-2-acetolactate (S2AL) to yield (R)-2,3-dihydroxy-isovalerate. In the isomerase reaction, S2AL is rearranged via a Mg-dependent methyl migration to produce 3-hydroxy-3-methyl-2-ketobutyrate (HMKB). In the reductase reaction, this 2-ketoacid undergoes a metal-dependent reduction by NADPH to yield (R)-2,3-dihydroxy-isovalerate. The sequence is that of Ketol-acid reductoisomerase (NADP(+)) from Nitrobacter hamburgensis (strain DSM 10229 / NCIMB 13809 / X14).